A 483-amino-acid polypeptide reads, in one-letter code: Protein nucleotidyltransferase YdiU (483 aa).

Positions 81, 83, 84, 103, 115, 116, 166, and 173 each coordinate ATP. Residue D244 is the Proton acceptor of the active site. Positions 245 and 254 each coordinate Mg(2+). An ATP-binding site is contributed by D254.

The protein belongs to the SELO family. Requires Mg(2+) as cofactor. Mn(2+) is required as a cofactor.

The catalysed reaction is L-seryl-[protein] + ATP = 3-O-(5'-adenylyl)-L-seryl-[protein] + diphosphate. It catalyses the reaction L-threonyl-[protein] + ATP = 3-O-(5'-adenylyl)-L-threonyl-[protein] + diphosphate. The enzyme catalyses L-tyrosyl-[protein] + ATP = O-(5'-adenylyl)-L-tyrosyl-[protein] + diphosphate. It carries out the reaction L-histidyl-[protein] + UTP = N(tele)-(5'-uridylyl)-L-histidyl-[protein] + diphosphate. The catalysed reaction is L-seryl-[protein] + UTP = O-(5'-uridylyl)-L-seryl-[protein] + diphosphate. It catalyses the reaction L-tyrosyl-[protein] + UTP = O-(5'-uridylyl)-L-tyrosyl-[protein] + diphosphate. In terms of biological role, nucleotidyltransferase involved in the post-translational modification of proteins. It can catalyze the addition of adenosine monophosphate (AMP) or uridine monophosphate (UMP) to a protein, resulting in modifications known as AMPylation and UMPylation. This is Protein nucleotidyltransferase YdiU from Shewanella halifaxensis (strain HAW-EB4).